The sequence spans 654 residues: Transcription factor E2-alpha (654 aa).

A 9aaTAD motif is present at residues 19 to 27; that stretch reads LLDFSMMFP. A disordered region spans residues 31-103; the sequence is TNGKGRPASL…LGPGLGGKSG (73 aa). Over residues 55–68 the composition is skewed to low complexity; it reads SSGSWGSGDQSSSS. Over residues 69-79 the composition is skewed to polar residues; it reads FDPSRTFSEGT. Low complexity predominate over residues 84-94; it reads SHSSLSSSTFL. 2 positions are modified to phosphoserine: Ser-134 and Ser-139. Disordered stretches follow at residues 135-205, 239-268, 292-329, and 343-385; these read PGPL…SAKT, MLGGGSSPLPLPPGSGPVGSSGSSSTFGGL, SFSSAPGATYGGVSSHTPPVSGADSLLGSRGTTAGSSG, and DHSS…YDGG. Residues 147-156 show a composition bias toward low complexity; it reads SQYYPSYSGS. The Nuclear localization signal motif lies at 170-176; sequence PKKVRKV. Over residues 256 to 268 the composition is skewed to low complexity; the sequence is VGSSGSSSTFGGL. The segment covering 343–354 has biased composition (low complexity); that stretch reads DHSSNNFSSSPS. A Phosphothreonine modification is found at Thr-355. Residue Ser-359 is modified to Phosphoserine. Arg-371 carries the post-translational modification Omega-N-methylarginine. Position 379 is a phosphoserine (Ser-379). The leucine-zipper stretch occupies residues 389–425; that stretch reads LQSKIEDHLDEAIHVLRSHAVGTAGDMHTLLPGHGAL. The segment at 461-552 is disordered; the sequence is NHAALPSQPG…KAEREKERRV (92 aa). Lys-498 participates in a covalent cross-link: Glycyl lysine isopeptide (Lys-Gly) (interchain with G-Cter in SUMO2). Basic and acidic residues predominate over residues 512-523; sequence DHSEEEKKELKA. Ser-529 carries the phosphoserine modification. Asp-531 is modified (phosphothreonine). Over residues 542–552 the composition is skewed to basic and acidic residues; sequence QKAEREKERRV. The 54-residue stretch at 549 to 602 folds into the bHLH domain; the sequence is ERRVANNARERLRVRDINEAFKELGRMCQLHLNSEKPQTKLLILHQAVSVILNL. Residue Lys-625 forms a Glycyl lysine isopeptide (Lys-Gly) (interchain with G-Cter in SUMO2) linkage. The interval 633 to 654 is disordered; sequence PQMVLSAPHPGLSEAHNPAGHM.

As to quaternary structure, homodimer. Heterodimer; efficient DNA binding requires dimerization with another bHLH protein. Forms a heterodimer with ASH1, TWIST1 and TWIST2. Forms a heterodimer with MYOG; heterodimerization enhances MYOG DNA-binding and transcriptional activities. Forms a heterodimer with NEUROD1; the heterodimer is inhibited in presence of ID2, but not NR0B2, to E-box element. Forms a heterodimer with TCF15; the heterodimer binds E-box element. Forms a heterodimer with ATOH8; repress transcription of TCF3 and TCF3/NEUROG3 dimer-induced transactivation of E box-dependent promoters. Component of a nuclear TAL-1 complex composed at least of CBFA2T3, LDB1, TAL1 and TCF3. Interacts with NEUROD2, PTF1A and TGFB1I1. Interacts with EP300 and UBE2I. Interacts with BHLHA9. Interacts with ASB2; the interaction is mediated by SKP2 and targets TCF3 for Notch-induced proteasomal degradation. Forms a heterodimer with ATOH7; required for ATOH7 DNA-binding. In terms of assembly, interacts with RALGAPA1 and FIGLA. In terms of processing, phosphorylated following NGF stimulation. Undergoes Notch-induced ubiquitination and subsequent proteasomal degradation which is mediated by ASB1 or ASB2, the substrate-recognition components of probable ECS E3 ubiquitin-protein ligase complexes.

The protein resides in the nucleus. In terms of biological role, transcriptional regulator involved in the initiation of neuronal differentiation and mesenchymal to epithelial transition. Heterodimers between TCF3 and tissue-specific basic helix-loop-helix (bHLH) proteins play major roles in determining tissue-specific cell fate during embryogenesis, like muscle or early B-cell differentiation. Together with TCF15, required for the mesenchymal to epithelial transition. Dimers bind DNA on E-box motifs: 5'-CANNTG-3'. Binds to the kappa-E2 site in the kappa immunoglobulin gene enhancer. Binds to IEB1 and IEB2, which are short DNA sequences in the insulin gene transcription control region. Its function is as follows. Facilitates ATOH7 binding to DNA at the consensus sequence 5'-CAGGTG-3', and positively regulates transcriptional activity. The chain is Transcription factor E2-alpha (TCF3) from Homo sapiens (Human).